The chain runs to 72 residues: UPF0154 protein lhv_1362 (72 aa).

A helical membrane pass occupies residues 3–23 (LGLAIFLIIIALLVGAVAGFY).

Belongs to the UPF0154 family.

It localises to the cell membrane. The chain is UPF0154 protein lhv_1362 from Lactobacillus helveticus (strain DPC 4571).